The sequence spans 905 residues: Translation initiation factor IF-2 (905 aa).

Positions histidine 50–glutamate 62 are enriched in basic and acidic residues. Positions histidine 50–leucine 306 are disordered. Over residues lysine 63–lysine 75 the composition is skewed to low complexity. Residues glycine 89–alanine 125 are compositionally biased toward pro residues. The segment covering proline 161–proline 171 has biased composition (low complexity). Positions glycine 233–glycine 276 are enriched in gly residues. Positions arginine 280–arginine 290 are enriched in basic residues. Over residues histidine 291–glycine 302 the composition is skewed to basic and acidic residues. The region spanning lysine 401–threonine 575 is the tr-type G domain. The segment at glycine 410–threonine 417 is G1. Position 410 to 417 (glycine 410 to threonine 417) interacts with GTP. The interval glycine 435–glycine 439 is G2. The segment at aspartate 460–glycine 463 is G3. GTP-binding positions include aspartate 460–histidine 464 and asparagine 514–aspartate 517. Residues asparagine 514 to aspartate 517 form a G4 region. The G5 stretch occupies residues serine 550 to lysine 552.

The protein belongs to the TRAFAC class translation factor GTPase superfamily. Classic translation factor GTPase family. IF-2 subfamily.

It localises to the cytoplasm. In terms of biological role, one of the essential components for the initiation of protein synthesis. Protects formylmethionyl-tRNA from spontaneous hydrolysis and promotes its binding to the 30S ribosomal subunits. Also involved in the hydrolysis of GTP during the formation of the 70S ribosomal complex. The sequence is that of Translation initiation factor IF-2 from Corynebacterium aurimucosum (strain ATCC 700975 / DSM 44827 / CIP 107346 / CN-1) (Corynebacterium nigricans).